The primary structure comprises 389 residues: Chalcone synthase (389 aa).

The active site involves C164.

Belongs to the thiolase-like superfamily. Chalcone/stilbene synthases family.

It carries out the reaction (E)-4-coumaroyl-CoA + 3 malonyl-CoA + 3 H(+) = 2',4,4',6'-tetrahydroxychalcone + 3 CO2 + 4 CoA. It functions in the pathway secondary metabolite biosynthesis; flavonoid biosynthesis. Functionally, the primary product of this enzyme is 4,2',4',6'-tetrahydroxychalcone (also termed naringenin-chalcone or chalcone) which can under specific conditions spontaneously isomerize into naringenin. The sequence is that of Chalcone synthase (CHS) from Hydrangea macrophylla (Bigleaf hydrangea).